Here is a 463-residue protein sequence, read N- to C-terminus: Bifunctional protein HldE (463 aa).

A ribokinase region spans residues 1-313 (MTGPMAVRTD…RALAALPDTD (313 aa)). Aspartate 258 is an active-site residue. The interval 331–463 (AAGGCFDLLH…LLARAAEGAR (133 aa)) is cytidylyltransferase.

This sequence in the N-terminal section; belongs to the carbohydrate kinase PfkB family. It in the C-terminal section; belongs to the cytidylyltransferase family. Homodimer.

It catalyses the reaction D-glycero-beta-D-manno-heptose 7-phosphate + ATP = D-glycero-beta-D-manno-heptose 1,7-bisphosphate + ADP + H(+). The catalysed reaction is D-glycero-beta-D-manno-heptose 1-phosphate + ATP + H(+) = ADP-D-glycero-beta-D-manno-heptose + diphosphate. It participates in nucleotide-sugar biosynthesis; ADP-L-glycero-beta-D-manno-heptose biosynthesis; ADP-L-glycero-beta-D-manno-heptose from D-glycero-beta-D-manno-heptose 7-phosphate: step 1/4. The protein operates within nucleotide-sugar biosynthesis; ADP-L-glycero-beta-D-manno-heptose biosynthesis; ADP-L-glycero-beta-D-manno-heptose from D-glycero-beta-D-manno-heptose 7-phosphate: step 3/4. Functionally, catalyzes the phosphorylation of D-glycero-D-manno-heptose 7-phosphate at the C-1 position to selectively form D-glycero-beta-D-manno-heptose-1,7-bisphosphate. In terms of biological role, catalyzes the ADP transfer from ATP to D-glycero-beta-D-manno-heptose 1-phosphate, yielding ADP-D-glycero-beta-D-manno-heptose. This Streptomyces coelicolor (strain ATCC BAA-471 / A3(2) / M145) protein is Bifunctional protein HldE.